The sequence spans 478 residues: Solute carrier family 2, facilitated glucose transporter member 8 (478 aa).

The disordered stretch occupies residues 1-20 (MTPEDQEETQPLLRPPGGSA). The Cytoplasmic portion of the chain corresponds to 1–25 (MTPEDQEETQPLLRPPGGSAPRGRR). The segment covering 11–20 (PLLRPPGGSA) has biased composition (low complexity). The Dileucine internalization motif motif lies at 12 to 13 (LL). The helical transmembrane segment at 26-46 (VFLAAFAAALGPLSFGFALGY) threads the bilayer. Residues 47–70 (SSPAIPSLRRAAPPAPHLDEDAAS) are Extracellular-facing. The helical transmembrane segment at 71 to 91 (WFGAIVTLGAAAGGVLGGWLL) threads the bilayer. At 92-97 (DRAGRK) the chain is on the cytoplasmic side. A helical membrane pass occupies residues 98–118 (LSLVLCALPFVAGFAVITAAQ). Residues 119 to 127 (NLWMLLGGR) lie on the Extracellular side of the membrane. Residues 128–148 (LLTGLACGIASLVAPVYISEI) traverse the membrane as a helical segment. Residues 149-158 (AYPEVRGLLG) lie on the Cytoplasmic side of the membrane. The helical transmembrane segment at 159–179 (SCVQLMVVTGILLAYLAGWVL) threads the bilayer. Residue Gln162 participates in D-glucose binding. Topologically, residues 180-182 (EWR) are extracellular. The chain crosses the membrane as a helical span at residues 183–203 (WLAVLGCVPPSFMLLLMCFMP). At 204–257 (ETPRFLLSQHKHQEAMAAMQFLWGYAQGWEEPPLGAQHQDFHVAQLRRPGVYKP) the chain is on the cytoplasmic side. Residues 258–278 (FIIGISLMAFQQLSGVNAVMF) form a helical membrane-spanning segment. D-glucose contacts are provided by residues 268–269 (QQ) and Asn274. At 279–293 (YAETIFEEAKFKDSS) the chain is on the extracellular side. The chain crosses the membrane as a helical span at residues 294-314 (LASVVVGVIQVLFTATAALIM). The Cytoplasmic segment spans residues 315 to 320 (DRAGRR). A helical membrane pass occupies residues 321-341 (LLLTLSGVVMVFSTSAFGTYF). Over 342-368 (KLTEGGPSNSSHVDLPALVSMEAADTN) the chain is Extracellular. A glycan (N-linked (GlcNAc...) asparagine) is linked at Asn350. A helical transmembrane segment spans residues 369-389 (VGLAWLAVGSMCLFIAGFAVG). The Cytoplasmic portion of the chain corresponds to 390–405 (WGPIPWLLMSEIFPLH). Trp395 contributes to the D-glucose binding site. A helical transmembrane segment spans residues 406–426 (VKGVATGVCVLTNWFMAFLVT). The Extracellular portion of the chain corresponds to 427-439 (KEFSSLMEVLRPY). Residues 440–460 (GAFWLASAFCIFGVLFTLACV) form a helical membrane-spanning segment. Residues 461–478 (PETKGKTLEQITAHFEGR) lie on the Cytoplasmic side of the membrane.

The protein belongs to the major facilitator superfamily. Sugar transporter (TC 2.A.1.1) family. Glucose transporter subfamily. In terms of assembly, interacts with AP2B1. Abundantly expressed in testis and more moderately in lung, kidney, spleen, intestine, skeletal muscle, liver and mammary gland.

Its subcellular location is the cell membrane. It localises to the cytoplasmic vesicle membrane. It catalyses the reaction D-glucose(out) = D-glucose(in). The catalysed reaction is D-fructose(out) = D-fructose(in). The enzyme catalyses L-dehydroascorbate(out) = L-dehydroascorbate(in). It carries out the reaction alpha,alpha-trehalose(in) = alpha,alpha-trehalose(out). Its activity is regulated as follows. Inhibited by cytochalasin B. In terms of biological role, insulin-regulated facilitative hexose transporter that mediates the transport of glucose and fructose. Facilitates hepatic influx of dietary trehalose, which in turn inhibits glucose and fructose influx triggering a starvation signal and hepatic autophagy through activation of AMPK and ULK1. Also able to mediate the transport of dehydroascorbate. This is Solute carrier family 2, facilitated glucose transporter member 8 from Bos taurus (Bovine).